The chain runs to 388 residues: F-box/LRR-repeat protein At3g59190 (388 aa).

The F-box domain maps to 11-64 (KDIISNLPDALLCHVLSFLPTTEAASTSVLAKRWRFLLAFVPNLDLDNMIYDRP). LRR repeat units follow at residues 151–177 (KVSG…HLSA), 180–205 (FGDE…VMIK), 228–252 (CENI…EFTD), 313–345 (TMYL…TVET), and 346–371 (DERV…IFEV).

This is F-box/LRR-repeat protein At3g59190 from Arabidopsis thaliana (Mouse-ear cress).